A 259-amino-acid chain; its full sequence is Hydroxyethylthiazole kinase (259 aa).

Methionine 38 is a binding site for substrate. ATP is bound by residues arginine 113 and serine 158. Residue glycine 185 coordinates substrate.

Belongs to the Thz kinase family. The cofactor is Mg(2+).

It catalyses the reaction 5-(2-hydroxyethyl)-4-methylthiazole + ATP = 4-methyl-5-(2-phosphooxyethyl)-thiazole + ADP + H(+). The protein operates within cofactor biosynthesis; thiamine diphosphate biosynthesis; 4-methyl-5-(2-phosphoethyl)-thiazole from 5-(2-hydroxyethyl)-4-methylthiazole: step 1/1. Catalyzes the phosphorylation of the hydroxyl group of 4-methyl-5-beta-hydroxyethylthiazole (THZ). The protein is Hydroxyethylthiazole kinase of Leuconostoc citreum (strain KM20).